Reading from the N-terminus, the 193-residue chain is Probable GTP-binding protein EngB (193 aa).

Residues 22-193 (ALPEFALAGR…EAWAALERFL (172 aa)) form the EngB-type G domain. Residues 30–37 (GRSNVGKS), 57–61 (GKTQT), 75–78 (DVPG), 142–145 (TKAD), and 174–176 (FSA) contribute to the GTP site. Mg(2+) is bound by residues serine 37 and threonine 59.

The protein belongs to the TRAFAC class TrmE-Era-EngA-EngB-Septin-like GTPase superfamily. EngB GTPase family. It depends on Mg(2+) as a cofactor.

In terms of biological role, necessary for normal cell division and for the maintenance of normal septation. This chain is Probable GTP-binding protein EngB, found in Geobacillus sp. (strain WCH70).